The chain runs to 322 residues: L-asparaginase (322 aa).

In terms of domain architecture, Asparaginase/glutaminase spans 3–322 (KKVALITTGG…KEGIKDKFCY (320 aa)). Threonine 13 (O-isoaspartyl threonine intermediate) is an active-site residue. Residues serine 56 and 89–90 (TD) contribute to the substrate site.

Belongs to the asparaginase 1 family. As to quaternary structure, homotetramer.

The protein resides in the cytoplasm. The catalysed reaction is L-asparagine + H2O = L-aspartate + NH4(+). In Bacillus licheniformis, this protein is L-asparaginase (ansA).